We begin with the raw amino-acid sequence, 435 residues long: Light-independent protochlorophyllide reductase subunit N (435 aa).

[4Fe-4S] cluster is bound by residues Cys-23, Cys-48, and Cys-108.

Belongs to the BchN/ChlN family. In terms of assembly, protochlorophyllide reductase is composed of three subunits; ChlL, ChlN and ChlB. Forms a heterotetramer of two ChlB and two ChlN subunits. The cofactor is [4Fe-4S] cluster.

The protein localises to the plastid. Its subcellular location is the chloroplast. The enzyme catalyses chlorophyllide a + oxidized 2[4Fe-4S]-[ferredoxin] + 2 ADP + 2 phosphate = protochlorophyllide a + reduced 2[4Fe-4S]-[ferredoxin] + 2 ATP + 2 H2O. It functions in the pathway porphyrin-containing compound metabolism; chlorophyll biosynthesis (light-independent). In terms of biological role, component of the dark-operative protochlorophyllide reductase (DPOR) that uses Mg-ATP and reduced ferredoxin to reduce ring D of protochlorophyllide (Pchlide) to form chlorophyllide a (Chlide). This reaction is light-independent. The NB-protein (ChlN-ChlB) is the catalytic component of the complex. The protein is Light-independent protochlorophyllide reductase subunit N of Auxenochlorella protothecoides (Green microalga).